The chain runs to 355 residues: Aurora kinase (355 aa).

One can recognise a Protein kinase domain in the interval 89–340 (FEIGKPLGKG…LEQVMRHPWI (252 aa)). Residues 95–103 (LGKGKFGRV) and lysine 118 contribute to the ATP site. Aspartate 212 functions as the Proton acceptor in the catalytic mechanism.

It belongs to the protein kinase superfamily. Ser/Thr protein kinase family. Aurora subfamily. Component of the CPC complex at least composed of ark1, bir1 and pic1. Interacts with the mitotic checkpoint complex (MCC) subunit mad3.

The protein localises to the nucleus. Its subcellular location is the cytoplasm. It is found in the cytoskeleton. The protein resides in the spindle. It catalyses the reaction L-seryl-[protein] + ATP = O-phospho-L-seryl-[protein] + ADP + H(+). The enzyme catalyses L-threonyl-[protein] + ATP = O-phospho-L-threonyl-[protein] + ADP + H(+). Functionally, component of the chromosomal passenger complex (CPC), a complex that acts as a key regulator of chromosome segregation and cytokinesis. Has a role in error-correction of aberrent kinetochore-microtubule attachments to ensure that sister kinetochores become bioriented and connect to opposite poles by promoting spindle assembly checkpoint signaling. Ark1 is also required for phosphorylation of histone H3 that accompanies chromosome condensation and condensin recruitment to mitotic chromatin. The polypeptide is Aurora kinase (ark1) (Schizosaccharomyces pombe (strain 972 / ATCC 24843) (Fission yeast)).